The chain runs to 1318 residues: MAETKSAPIFRNRVIDKKQLKKLIGWTFAHYGTAKTAVVADDLKALGFRYATRAGVSISIDDLKVPGSKAELLESAEKRIQETEDRYTRGEITEVERFQKVIDTWANTNDELTDRVVKNFRESDPLNSVYMMAFSGARGNISQVRQLVGMRGLMANPQGEIIDLPIKTNFREGLTVTEYIISSYGARKGLVDTALRTADSGYLTRRLVDVSQDVIIHEVDCGTSRGLFVEAMTDGDRILIPISQRLLGRVTAEAVLDPSTDEVLAEAGQDINEDLANRIEKAGIKKVKVRSPLTCEAARSVCQKCYGWSLAHAQMVDMGEAVGIIAAQSIGEPGTQLTMRTFHTGGVFTGETARLLRAPVAGTIKLGKKARTRPYRTRHGEEALLAEANFDLVLEGKGRKETFAILQGSTIFVQDGDKVAAEAILAEVPVSGRTKRTVEKATKDVATDLAGEIRFQDIVPEEKTDRQGNTTRIAQRGGLLWVLAGDVYNLLPGAEPTVKNGDRVEVGDVLAETKLTTERGGTVRMGEDNGSSTHREVEIITASVVLDTATVKAEASQGREHYVIETKGGQRFNLLAAPGTKVTTGHVVAELIDSRYRTQTGGLLKYSGVEISKKGRAKAKQGYEVTKGGTLLWIPEETHEVNKDISLLNVEDGQLVEAGTEVVKDIFCQTTGIVSVTQNNDILREIVIKPGDVHVLDDPDTAAKYDEGRLVNAGEEVFPGLTAEQLVWAEAVDGTDGPLLLLRPVQELVIPDEPPVPSQDSSQESSSRSIRLRAVQRLQFQDGERIKSVEGVDLLRTQLVLESEEGSSQLSADIELLPDSKDPETLRLQLVIIEPVVTRRDVASDTTHGSTHTELRVKDGQKVKPGAVIACTQIQCKEAGVVRGIQEGSEAVRRLLVERERDCVTLDLDVTAATQLQPGSLIVAGTQLVDGIIAPESGEARAIAPGQLQLRIARPYRVSQGAVLHVEDKGLVQRGDNLVLLVFERAKTGDIIQGLPRIEELLEARKPKEACILARRPGVAHINYSDDDAIDIQVIEADGTQADYPVGPGQPLIISDGETVDAGQALTDGPANPHDLLEIYYDYFREQLGEDYEAALESLRRVQALLVNEVQSVYQSQGIDISDKHIEVIVRQMTSKVRIDDGGDTIMLPGELHELREVYNSNNTMALTGMAPAQFTPVLLGITKASLNTNSFISAASFQETTRVLTEAAIEGKSDWLRGLKENVIIGRLIPAGTGFKAYEESLLTDVDGGYEDRVYDDDLADVVIDDRAARSYTLNEGRDFSRSMTFAEGESMILDDGEELIDDSSASLRNLVDVDED.

Residues Cys-221, Cys-295, Cys-302, and Cys-305 each coordinate Zn(2+).

This sequence belongs to the RNA polymerase beta' chain family. RpoC2 subfamily. In terms of assembly, in cyanobacteria the RNAP catalytic core is composed of 2 alpha, 1 beta, 1 beta', 1 gamma and 1 omega subunit. When a sigma factor is associated with the core the holoenzyme is formed, which can initiate transcription. It depends on Zn(2+) as a cofactor.

It catalyses the reaction RNA(n) + a ribonucleoside 5'-triphosphate = RNA(n+1) + diphosphate. DNA-dependent RNA polymerase catalyzes the transcription of DNA into RNA using the four ribonucleoside triphosphates as substrates. The sequence is that of DNA-directed RNA polymerase subunit beta' from Synechococcus sp. (strain ATCC 27144 / PCC 6301 / SAUG 1402/1) (Anacystis nidulans).